Consider the following 1375-residue polypeptide: Ubiquitin carboxyl-terminal hydrolase 47 (1375 aa).

K122 bears the N6-acetyllysine mark. One can recognise a USP domain in the interval 188–564; sequence VGLVNQAMTC…NAYMLIYRLK (377 aa). C197 acts as the Nucleophile in catalysis. The segment at 425 to 452 is disordered; that stretch reads DEKSPQTESCTDSGAENEGSCHSDQMSN. Positions 430-452 are enriched in polar residues; the sequence is QTESCTDSGAENEGSCHSDQMSN. H503 acts as the Proton acceptor in catalysis. Phosphoserine is present on S832. 3 disordered regions span residues 840–859, 880–968, and 983–1024; these read TAYQKAGGDSGNVDDDCERV, LKSL…SHSS, and NGLD…ESGK. The segment covering 882–899 has biased composition (low complexity); it reads SLSLQQQQDGDNGDSSKS. S910 bears the Phosphoserine mark. Positions 912–928 are enriched in basic and acidic residues; it reads LNERDSSASVDNRELEQ. Polar residues predominate over residues 929 to 938; sequence HIQTSDPENF. S933 is subject to Phosphoserine. Basic and acidic residues predominate over residues 940–950; the sequence is SEERSDSDVNN. A compositionally biased stretch (low complexity) spans 953–968; sequence STSSVDSDILSSSHSS. The segment covering 997-1006 has biased composition (basic and acidic residues); the sequence is KANEGKKETW. Residues 1007 to 1020 show a composition bias toward acidic residues; the sequence is DTAEEDSGTDSEYD. The residue at position 1013 (S1013) is a Phosphoserine. At T1015 the chain carries Phosphothreonine. At S1017 the chain carries Phosphoserine.

This sequence belongs to the peptidase C19 family. In terms of assembly, interacts with BTRC and FBXW11. Interacts with POLB. As to expression, expressed in skeletal muscle, heart and testis.

Its subcellular location is the cytoplasm. It carries out the reaction Thiol-dependent hydrolysis of ester, thioester, amide, peptide and isopeptide bonds formed by the C-terminal Gly of ubiquitin (a 76-residue protein attached to proteins as an intracellular targeting signal).. Functionally, ubiquitin-specific protease that specifically deubiquitinates monoubiquitinated DNA polymerase beta (POLB), stabilizing POLB thereby playing a role in base-excision repair (BER). Acts as a regulator of cell growth and genome integrity. May also indirectly regulate CDC25A expression at a transcriptional level. In Homo sapiens (Human), this protein is Ubiquitin carboxyl-terminal hydrolase 47 (USP47).